Reading from the N-terminus, the 891-residue chain is Alanine--tRNA ligase (891 aa).

Residues histidine 569, histidine 573, cysteine 671, and histidine 675 each contribute to the Zn(2+) site.

Belongs to the class-II aminoacyl-tRNA synthetase family. Homotetramer. It depends on Zn(2+) as a cofactor.

It localises to the cytoplasm. The enzyme catalyses tRNA(Ala) + L-alanine + ATP = L-alanyl-tRNA(Ala) + AMP + diphosphate. Its function is as follows. Catalyzes the attachment of alanine to tRNA(Ala) in a two-step reaction: alanine is first activated by ATP to form Ala-AMP and then transferred to the acceptor end of tRNA(Ala). Also edits incorrectly charged Ser-tRNA(Ala) and Gly-tRNA(Ala) via its editing domain. In Blochmanniella floridana, this protein is Alanine--tRNA ligase.